We begin with the raw amino-acid sequence, 433 residues long: Histidinol dehydrogenase (433 aa).

Substrate contacts are provided by serine 236, glutamine 258, and histidine 261. 2 residues coordinate Zn(2+): glutamine 258 and histidine 261. Catalysis depends on proton acceptor residues glutamate 325 and histidine 326. Positions 326, 359, 413, and 418 each coordinate substrate. Residue aspartate 359 coordinates Zn(2+). Residue histidine 418 participates in Zn(2+) binding.

Belongs to the histidinol dehydrogenase family. Zn(2+) is required as a cofactor.

It carries out the reaction L-histidinol + 2 NAD(+) + H2O = L-histidine + 2 NADH + 3 H(+). Its pathway is amino-acid biosynthesis; L-histidine biosynthesis; L-histidine from 5-phospho-alpha-D-ribose 1-diphosphate: step 9/9. In terms of biological role, catalyzes the sequential NAD-dependent oxidations of L-histidinol to L-histidinaldehyde and then to L-histidine. In Pseudoalteromonas translucida (strain TAC 125), this protein is Histidinol dehydrogenase.